Here is a 478-residue protein sequence, read N- to C-terminus: Lipoprotein lipase (478 aa).

An N-terminal signal peptide occupies residues methionine 1 to threonine 27. Residues arginine 35 to threonine 56 form an interaction with GPIHBP1 region. Cysteines 57 and 70 form a disulfide. N-linked (GlcNAc...) asparagine glycosylation occurs at asparagine 73. Tyrosine 124 carries the 3'-nitrotyrosine modification. The Nucleophile role is filled by serine 162. Residue aspartate 186 is the Charge relay system of the active site. Tyrosine 194 bears the 3'-nitrotyrosine mark. The Ca(2+) site is built by alanine 197, arginine 200, serine 202, and aspartate 205. Cysteine 246 and cysteine 269 are oxidised to a cystine. Positions cysteine 246 to cysteine 269 are essential for determining substrate specificity. Histidine 271 functions as the Charge relay system in the catalytic mechanism. Disulfide bonds link cysteine 294–cysteine 313 and cysteine 305–cysteine 308. A PLAT domain is found at phenylalanine 344 to lysine 467. At tyrosine 346 the chain carries 3'-nitrotyrosine. Asparagine 389 carries an N-linked (GlcNAc...) asparagine glycan. The important for interaction with lipoprotein particles stretch occupies residues tryptophan 420 to tryptophan 424. Residues lysine 433–lysine 437 are important for heparin binding. Positions isoleucine 446–aspartate 470 are interaction with GPIHBP1. A disulfide bridge connects residues cysteine 448 and cysteine 468.

Belongs to the AB hydrolase superfamily. Lipase family. In terms of assembly, homodimer. Interacts with GPIHBP1 with 1:1 stoichiometry. Interacts with APOC2; the interaction activates LPL activity in the presence of lipids. Interaction with heparan sulfate proteoglycans is required to protect LPL against loss of activity. Associates with lipoprotein particles in blood plasma. Interacts with LMF1 and SEL1L; interaction with SEL1L is required to prevent aggregation of newly synthesized LPL in the endoplasmic reticulum (ER), and for normal export of LPL from the ER to the extracellular space. Interacts with SORL1; SORL1 acts as a sorting receptor, promoting LPL localization to endosomes and later to lysosomes, leading to degradation of newly synthesized LPL. Post-translationally, tyrosine nitration after lipopolysaccharide (LPS) challenge down-regulates the lipase activity.

Its subcellular location is the cell membrane. The protein resides in the secreted. It is found in the extracellular space. The protein localises to the extracellular matrix. It catalyses the reaction a triacylglycerol + H2O = a diacylglycerol + a fatty acid + H(+). The enzyme catalyses a 1,2-diacyl-sn-glycero-3-phosphocholine + H2O = a 2-acyl-sn-glycero-3-phosphocholine + a fatty acid + H(+). The catalysed reaction is 1,2,3-tri-(9Z-octadecenoyl)-glycerol + H2O = di-(9Z)-octadecenoylglycerol + (9Z)-octadecenoate + H(+). It carries out the reaction 1,2-di-(9Z-octadecenoyl)-sn-glycero-3-phosphocholine + H2O = (9Z-octadecenoyl)-sn-glycero-3-phosphocholine + (9Z)-octadecenoate + H(+). It catalyses the reaction 1,2,3-tributanoylglycerol + H2O = dibutanoylglycerol + butanoate + H(+). The enzyme catalyses 1,2-dihexadecanoyl-sn-glycero-3-phosphocholine + H2O = hexadecanoyl-sn-glycero-3-phosphocholine + hexadecanoate + H(+). The apolipoprotein APOC2 acts as a coactivator of LPL activity. Ca(2+) binding promotes protein stability and formation of the active homodimer. Interaction with GPIHBP1 protects LPL against inactivation by ANGPTL4. Its function is as follows. Key enzyme in triglyceride metabolism. Catalyzes the hydrolysis of triglycerides from circulating chylomicrons and very low density lipoproteins (VLDL), and thereby plays an important role in lipid clearance from the blood stream, lipid utilization and storage. Although it has both phospholipase and triglyceride lipase activities it is primarily a triglyceride lipase with low but detectable phospholipase activity. Mediates margination of triglyceride-rich lipoprotein particles in capillaries. Recruited to its site of action on the luminal surface of vascular endothelium by binding to GPIHBP1 and cell surface heparan sulfate proteoglycans. The sequence is that of Lipoprotein lipase (LPL) from Sus scrofa (Pig).